Here is a 343-residue protein sequence, read N- to C-terminus: Probable 4-hydroxy-tetrahydrodipicolinate reductase 1, chloroplastic (343 aa).

The N-terminal 14 residues, 1-14 (MLASTFATHPAAAA), are a transit peptide targeting the chloroplast. NAD(+)-binding positions include 167–169 (GTT) and 190–193 (SPQM). The active-site Proton donor/acceptor is the His-226. Lys-230 serves as the catalytic Proton donor. Position 235–236 (235–236 (GT)) interacts with (S)-2,3,4,5-tetrahydrodipicolinate.

The protein belongs to the DapB family.

Its subcellular location is the plastid. The protein resides in the chloroplast. It carries out the reaction (S)-2,3,4,5-tetrahydrodipicolinate + NAD(+) + H2O = (2S,4S)-4-hydroxy-2,3,4,5-tetrahydrodipicolinate + NADH + H(+). It catalyses the reaction (S)-2,3,4,5-tetrahydrodipicolinate + NADP(+) + H2O = (2S,4S)-4-hydroxy-2,3,4,5-tetrahydrodipicolinate + NADPH + H(+). It participates in amino-acid biosynthesis; L-lysine biosynthesis via DAP pathway; (S)-tetrahydrodipicolinate from L-aspartate: step 4/4. Catalyzes the conversion of 4-hydroxy-tetrahydrodipicolinate (HTPA) to tetrahydrodipicolinate. This Oryza sativa subsp. japonica (Rice) protein is Probable 4-hydroxy-tetrahydrodipicolinate reductase 1, chloroplastic (DAPB1).